Here is a 230-residue protein sequence, read N- to C-terminus: ATP synthase subunit a (230 aa).

6 helical membrane-spanning segments follow: residues 26–46 (ANAV…SLIA), 83–103 (FFPL…VGLI), 112–132 (NVNT…VVGI), 143–163 (FMGP…IGHL), 182–202 (LVLM…MMLM), and 203–223 (GVLV…IYIQ).

This sequence belongs to the ATPase A chain family. As to quaternary structure, F-type ATPases have 2 components, CF(1) - the catalytic core - and CF(0) - the membrane proton channel. CF(1) has five subunits: alpha(3), beta(3), gamma(1), delta(1), epsilon(1). CF(0) has three main subunits: a(1), b(2) and c(9-12). The alpha and beta chains form an alternating ring which encloses part of the gamma chain. CF(1) is attached to CF(0) by a central stalk formed by the gamma and epsilon chains, while a peripheral stalk is formed by the delta and b chains.

The protein resides in the cell inner membrane. Functionally, key component of the proton channel; it plays a direct role in the translocation of protons across the membrane. The sequence is that of ATP synthase subunit a from Trichlorobacter lovleyi (strain ATCC BAA-1151 / DSM 17278 / SZ) (Geobacter lovleyi).